Consider the following 494-residue polypeptide: Glutamate--tRNA ligase (494 aa).

The 'HIGH' region signature appears at 9 to 19; the sequence is PSPTGDPHVGT. The 'KMSKS' region signature appears at 250-254; the sequence is KLSKR. Lys253 provides a ligand contact to ATP.

Belongs to the class-I aminoacyl-tRNA synthetase family. Glutamate--tRNA ligase type 1 subfamily. Monomer.

Its subcellular location is the cytoplasm. The enzyme catalyses tRNA(Glu) + L-glutamate + ATP = L-glutamyl-tRNA(Glu) + AMP + diphosphate. Functionally, catalyzes the attachment of glutamate to tRNA(Glu) in a two-step reaction: glutamate is first activated by ATP to form Glu-AMP and then transferred to the acceptor end of tRNA(Glu). The polypeptide is Glutamate--tRNA ligase (Alcanivorax borkumensis (strain ATCC 700651 / DSM 11573 / NCIMB 13689 / SK2)).